A 608-amino-acid chain; its full sequence is UvrABC system protein C (608 aa).

One can recognise a GIY-YIG domain in the interval 13-91 (HDPGVYRMFD…IKTFQPRYNV (79 aa)). Residues 201-236 (QQVLDHLIGKMERASRALNFEEAARYRDQIQAVRSV) form the UVR domain.

Belongs to the UvrC family. In terms of assembly, interacts with UvrB in an incision complex.

It localises to the cytoplasm. Functionally, the UvrABC repair system catalyzes the recognition and processing of DNA lesions. UvrC both incises the 5' and 3' sides of the lesion. The N-terminal half is responsible for the 3' incision and the C-terminal half is responsible for the 5' incision. This is UvrABC system protein C from Mannheimia succiniciproducens (strain KCTC 0769BP / MBEL55E).